A 194-amino-acid polypeptide reads, in one-letter code: GTP cyclohydrolase-2 (194 aa).

GTP is bound at residue Arg-47–Glu-51. Positions 52, 63, and 65 each coordinate Zn(2+). GTP contacts are provided by residues Gln-68, Glu-90–Arg-92, and Thr-112. Asp-124 acts as the Proton acceptor in catalysis. The Nucleophile role is filled by Arg-126. Residues Thr-147 and Lys-152 each contribute to the GTP site.

This sequence belongs to the GTP cyclohydrolase II family. As to quaternary structure, homodimer. Requires Zn(2+) as cofactor.

It catalyses the reaction GTP + 4 H2O = 2,5-diamino-6-hydroxy-4-(5-phosphoribosylamino)-pyrimidine + formate + 2 phosphate + 3 H(+). The protein operates within cofactor biosynthesis; riboflavin biosynthesis; 5-amino-6-(D-ribitylamino)uracil from GTP: step 1/4. Functionally, catalyzes the conversion of GTP to 2,5-diamino-6-ribosylamino-4(3H)-pyrimidinone 5'-phosphate (DARP), formate and pyrophosphate. In Buchnera aphidicola subsp. Acyrthosiphon pisum (strain APS) (Acyrthosiphon pisum symbiotic bacterium), this protein is GTP cyclohydrolase-2.